The following is a 338-amino-acid chain: Elongation factor Ts, mitochondrial (338 aa).

Residues 1-55 (MSLLRSLRLCLVARTGSCPLSALGPGPLLPSLQAGLPLLQSPQQWHTFHSGSWLS) constitute a mitochondrion transit peptide. N6-succinyllysine is present on residues K89, K146, and K205. Residue S283 is modified to Phosphoserine.

Belongs to the EF-Ts family.

It is found in the mitochondrion. Associates with the EF-Tu.GDP complex and induces the exchange of GDP to GTP. It remains bound to the aminoacyl-tRNA.EF-Tu.GTP complex up to the GTP hydrolysis stage on the ribosome. In Bos taurus (Bovine), this protein is Elongation factor Ts, mitochondrial.